An 83-amino-acid polypeptide reads, in one-letter code: Retinal cone rhodopsin-sensitive cGMP 3',5'-cyclic phosphodiesterase subunit gamma (83 aa).

Low complexity predominate over residues 1-19 (MSDNTTLAPPAASQAPATP). The interval 1 to 51 (MSDNTTLAPPAASQAPATPRKGPPKFKQRQTRQFKSKPPKKGVKGFGDDIP) is disordered. A compositionally biased stretch (basic residues) spans 22-43 (GPPKFKQRQTRQFKSKPPKKGV).

This sequence belongs to the rod/cone cGMP-PDE gamma subunit family. As to quaternary structure, tetramer composed of two catalytic chains (alpha and beta), and two inhibitory chains (gamma).

The enzyme catalyses 3',5'-cyclic GMP + H2O = GMP + H(+). Participates in processes of transmission and amplification of the visual signal. cGMP-PDEs are the effector molecules in G-protein-mediated phototransduction in vertebrate rods and cones. This chain is Retinal cone rhodopsin-sensitive cGMP 3',5'-cyclic phosphodiesterase subunit gamma (PDE6H), found in Ictidomys tridecemlineatus (Thirteen-lined ground squirrel).